The following is a 526-amino-acid chain: Major facilitator superfamily domain-containing protein 4A (526 aa).

Helical transmembrane passes span 21-41 (LTYW…GPTI), 55-75 (ITLV…IGGF), 84-104 (LSSL…IPLC), 107-127 (LLML…IDTI), 142-162 (VFLQ…PLIA), 215-235 (YAFW…FVLV), 297-317 (LSFF…DGIV), 341-361 (GYLT…AIPL), 377-397 (GVIV…FLFI), 401-421 (CLGL…EDIL), 430-450 (VLVT…GSVM), and 458-478 (FLLC…FLYF).

Belongs to the major facilitator superfamily.

The protein localises to the membrane. The chain is Major facilitator superfamily domain-containing protein 4A (mfsd4a) from Danio rerio (Zebrafish).